A 206-amino-acid chain; its full sequence is Cytochrome c (206 aa).

The next 3 membrane-spanning stretches (helical) occupy residues 10-30, 49-69, and 76-96; these read IALA…VSFL, FMGW…LGKM, and KWFL…FLSL. Cysteine 152, cysteine 155, histidine 156, and methionine 182 together coordinate heme.

As to quaternary structure, monomer. Component of the photosynthetic reaction center composed of protein subunits PscA, PscC, PscB and PscD. The reaction center interacts with FmoA (which forms the Fenna-Matthews-Olson (FMO) complex). The reaction center/FmoA complex has two PscA subunits, one PscB and one PscD subunit, probably two FmoA complexes and at least one PscC subunit. In terms of processing, binds 1 heme group per subunit.

The protein resides in the cell inner membrane. Monoheme cytochrome which is the immediate electron donor to P840 of the photosynthetic reaction center complex. The protein is Cytochrome c (pscC) of Chlorobaculum tepidum (strain ATCC 49652 / DSM 12025 / NBRC 103806 / TLS) (Chlorobium tepidum).